The chain runs to 387 residues: Small ribosomal subunit biogenesis GTPase RsgA (387 aa).

Residues 112–273 (YDGLKPVAAN…LIDSPGVREF (162 aa)) enclose the CP-type G domain. GTP is bound by residues 159 to 162 (NKID) and 213 to 221 (GQSGVGKSS). 4 residues coordinate Zn(2+): cysteine 297, cysteine 302, histidine 304, and cysteine 310.

This sequence belongs to the TRAFAC class YlqF/YawG GTPase family. RsgA subfamily. Monomer. Associates with 30S ribosomal subunit, binds 16S rRNA. The cofactor is Zn(2+).

The protein resides in the cytoplasm. Functionally, one of several proteins that assist in the late maturation steps of the functional core of the 30S ribosomal subunit. Helps release RbfA from mature subunits. May play a role in the assembly of ribosomal proteins into the subunit. Circularly permuted GTPase that catalyzes slow GTP hydrolysis, GTPase activity is stimulated by the 30S ribosomal subunit. The sequence is that of Small ribosomal subunit biogenesis GTPase RsgA from Vibrio cholerae serotype O1 (strain ATCC 39315 / El Tor Inaba N16961).